A 136-amino-acid polypeptide reads, in one-letter code: MTSLSRPRVEFISTILQTVLNLGLLCLGLILVVFLGKETVHLADVLFAPEQASKYELVEGLVVYFLYFEFIALIVKYFQSGFHFPLRYFVYIGITAIVRLIIVDHKSPLDVLIYSAAILLLVITLWLCNSKRLKRE.

A run of 4 helical transmembrane segments spans residues 15-35 (ILQT…VVFL), 55-75 (YELV…ALIV), 82-102 (FHFP…RLII), and 108-128 (PLDV…LWLC).

It belongs to the PsiE family.

Its subcellular location is the cell inner membrane. The protein is Protein PsiE of Escherichia coli (strain UTI89 / UPEC).